A 59-amino-acid polypeptide reads, in one-letter code: Small integral membrane protein 30 (59 aa).

The signal sequence occupies residues 1–24 (MNSVSTQLILVLASLLLILPVVEA). Over 25 to 29 (VEAGD) the chain is Extracellular. The chain crosses the membrane as a helical span at residues 30–50 (AIALLLGVVLSITGICACLGI). At 51 to 59 (YARKRNGQM) the chain is on the cytoplasmic side.

As to quaternary structure, interacts (via transmembrane domain) with antiviral protein MAVS (via transmembrane domain); the interaction disrupts MAVS interaction with RIGI and inhibits MAVS aggregation, resulting in the repression of type I interferon signaling and innate immune responses.

It is found in the endoplasmic reticulum membrane. The protein resides in the mitochondrion membrane. Negatively regulates antiviral innate immune responses. Disrupts the interaction of antiviral protein MAVS with innate immune receptor RIGI and inhibits MAVS aggregation, resulting in the repression of type I interferon signaling and innate immune responses. This is Small integral membrane protein 30 from Mus musculus (Mouse).